Reading from the N-terminus, the 92-residue chain is Large ribosomal subunit protein uL23c (92 aa).

Belongs to the universal ribosomal protein uL23 family. As to quaternary structure, part of the 50S ribosomal subunit.

It localises to the plastid. The protein resides in the chloroplast. Binds to 23S rRNA. The polypeptide is Large ribosomal subunit protein uL23c (rpl23) (Chara vulgaris (Common stonewort)).